Reading from the N-terminus, the 826-residue chain is Lethal(3)malignant brain tumor-like protein 1 (826 aa).

At Ser-136 the chain carries Phosphoserine. 2 disordered regions span residues 167–197 (LEPP…SGDR) and 220–271 (LLKP…RSQL). Residues 242 to 256 (EAVKQGEGKDAEREP) are compositionally biased toward basic and acidic residues. 3 MBT repeats span residues 280–380 (WSWE…LQLP), 388–487 (FSWS…LTPP), and 496–591 (FCWE…LEPP). The segment at 453 to 460 (FDDWGDTY) is interaction with monomethylated and dimethylated peptides. Residues 586 to 621 (HPLEPPLRPRESSSVSPGGCPPLSHRSPPHTKTSKY) are disordered. Over residues 612–621 (SPPHTKTSKY) the composition is skewed to basic residues. A CCHHC-type zinc finger spans residues 619 to 662 (SKYNFHHRKCPTPGCDGSGHVTGKFTAHHCLSGCPLAEKNQSRL). Zn(2+) is bound by residues Cys-628, Cys-633, His-646, and Cys-652. The segment at 663-699 (KAELSDSETAARKKNPSNLSPRKKPRHQGRIGRPPKY) is disordered. Residues 683–699 (PRKKPRHQGRIGRPPKY) are compositionally biased toward basic residues. The SAM domain maps to 757–821 (WTIEEVFGFV…YNAILMFKNT (65 aa)).

Homodimer. Interacts with RB1/RB (when monomethylated at 'Lys-860'). Interacts with p53/TP53 (when monomethylated at 'Lys-382'). Interacts with CBX3, ETV6, KMT5A and VCP/p97. Post-translationally, ubiquitinated in a VCP/p97-dependent way following DNA damage, leading to its removal from DNA damage sites, promoting accessibility of H4K20me2 mark for DNA repair protein TP53BP1, which is then recruited to DNA damage sites. As to expression, highly expressed in brain, testis, eyes, and ES cells.

It localises to the nucleus. In terms of biological role, polycomb group (PcG) protein that specifically recognizes and binds mono- and dimethyllysine residues on target proteins, thereby acting as a 'reader' of a network of post-translational modifications. PcG proteins maintain the transcriptionally repressive state of genes: acts as a chromatin compaction factor by recognizing and binding mono- and dimethylated histone H1b/H1-4 at 'Lys-26' (H1bK26me1 and H1bK26me2) and histone H4 at 'Lys-20' (H4K20me1 and H4K20me2), leading to condense chromatin and repress transcription. Recognizes and binds p53/TP53 monomethylated at 'Lys-382', leading to repress p53/TP53-target genes. Also recognizes and binds RB1/RB monomethylated at 'Lys-860'. Participates in the ETV6-mediated repression. Probably plays a role in cell proliferation. Overexpression induces multinucleated cells, suggesting that it is required to accomplish normal mitosis. The protein is Lethal(3)malignant brain tumor-like protein 1 (L3mbtl1) of Mus musculus (Mouse).